We begin with the raw amino-acid sequence, 1071 residues long: MLRDGGDEGMFTIPGFSQIQFEGFCRFIDQGLMEELHQFPKIEDTDQEIEFQLFGESYQLVEPLIKERDAVYESITYSSELYVPAGLIWRTGRNMQEQTVLLGNIPLMNSLGTSIVNGIYRIVINQILQSPGIYYSTGLDHNGISVYTGTIISDWGGRSELEIDRKERIWARVSRKQKISILVLSSAMGSSLREILDNVCYPEIFLSFPNEKEKKKIGSKENAILEFYQKFACVGGDPVFSESLCKELQKKFFQQRCELGRIGRRNMNQRLNLDIPPNNTFLLPRDVLAAADHLIGMKFGMGTLDDMNHLKNKRIRSVADLLQDQFGLALVRLENVVRGTICGAIRHKLIPTPRNLVTSTPLTTTYESFFGLHPLSQVLDRTNPLTQIVHGRKSSYLGPGGLTGRTASFRIRDIHPSHYGRICPIDTSEGINVGLIGSLAIHARVGDWGSIETPFYEISERSKEEQMVYLSPSRDEYYMVAAGNSLALTRGIQEEEVGPARYRQEFLTIAWEQIHLRNIYPFQYFSIGASLIPFIEHNDANRALMSSNMQRQAVPLSQSEKCIVGTGLERQAALDSGGSAIAEREGKIIYTDAEKIVLSGNGDTISIPLVMYQRSNKNTWMHQKPQVHRGKYLKKGQILADGAATVGGELALGKNVSVAYMPWEGYNSEDAVLISERLVYDDIYTSFHIRKYEIQTHVTSQGPERITNEIPHLEPYLLRNLDRNGIVMLGSWVETGDVLVGKLTPQTAKESSYAPEDRLLRAILGIQVSTAKETCLKLPIGGRGRVIDVRWGQKKGGSIYNPEMIRVYISQKRKIKVGDKVAGRHGNKGIISKILPRQDMPYLQDGTPVDMVFNPLGVPSRMNVGQMFECSLGLAGDLLGRHYRITPFDERYEQEASRKLVFSELYEASKQTANPWVFEPEYPGKSRIFDGRTGDPFEQPVIIGKSYMLKLIHQVDDKIHGRSSGHYALVTQQPLRGRAKQGGQRVGEMEVWALEGFGVAHILQEMLTYKSDHIRARQEVLGTTIVGGTIPNPEGAPESFRLLVRELRSLSLELNHFLVSEKNFQINRKEV.

Belongs to the RNA polymerase beta chain family. As to quaternary structure, in plastids the minimal PEP RNA polymerase catalytic core is composed of four subunits: alpha, beta, beta', and beta''. When a (nuclear-encoded) sigma factor is associated with the core the holoenzyme is formed, which can initiate transcription.

It localises to the plastid. Its subcellular location is the chloroplast. It carries out the reaction RNA(n) + a ribonucleoside 5'-triphosphate = RNA(n+1) + diphosphate. Functionally, DNA-dependent RNA polymerase catalyzes the transcription of DNA into RNA using the four ribonucleoside triphosphates as substrates. The polypeptide is DNA-directed RNA polymerase subunit beta (Nymphaea alba (White water-lily)).